Reading from the N-terminus, the 142-residue chain is Peptide methionine sulfoxide reductase MsrB (142 aa).

In terms of domain architecture, MsrB spans I2 to Y125. The active-site Nucleophile is C114.

Belongs to the MsrB Met sulfoxide reductase family.

It catalyses the reaction L-methionyl-[protein] + [thioredoxin]-disulfide + H2O = L-methionyl-(R)-S-oxide-[protein] + [thioredoxin]-dithiol. This is Peptide methionine sulfoxide reductase MsrB from Staphylococcus saprophyticus subsp. saprophyticus (strain ATCC 15305 / DSM 20229 / NCIMB 8711 / NCTC 7292 / S-41).